Consider the following 343-residue polypeptide: Probable F-box protein At1g67455 (343 aa).

Residues 1–46 form the F-box domain; that stretch reads MMISDLPEDMVEEILSRVSIISLGALRWNDLSKARVICKAEARQQF.

In Arabidopsis thaliana (Mouse-ear cress), this protein is Probable F-box protein At1g67455.